A 745-amino-acid chain; its full sequence is Copper-transporting ATPase (745 aa).

The 67-residue stretch at 1–67 folds into the HMA domain; that stretch reads MKESFYIEGM…LIEKLGYSPK (67 aa). Residues 1–83 are Cytoplasmic-facing; sequence MKESFYIEGM…KKEFFSPNVK (83 aa). C12 and C15 together coordinate Cu cation. A helical membrane pass occupies residues 84–104; the sequence is LALAVIFTLFVVYLSMGAMLS. The Extracellular segment spans residues 105 to 124; that stretch reads PSLLPESLLTINHHSNFLNA. Residues 125–144 form a helical membrane-spanning segment; that stretch reads CLQLIGALIVMHLGRDFYIQ. At 145–151 the chain is on the cytoplasmic side; the sequence is GFKALWH. A helical transmembrane segment spans residues 152–172; that stretch reads RQPNMSSLIAIGTSAALISSL. The Extracellular segment spans residues 173–194; the sequence is WQLYLVYTNHYTDQWSYGHYYF. Residues 195-215 traverse the membrane as a helical segment; the sequence is ESVCVILMFVMVGKRIENVSK. The Cytoplasmic segment spans residues 216–343; that stretch reads DKALDAMQAL…KAEISRLADK (128 aa). A helical membrane pass occupies residues 344-366; that stretch reads VSSVFVPSVIAIAVLAFVVWLII. The Extracellular segment spans residues 367–379; it reads APKPDFWWNFRTA. Residues 380-397 traverse the membrane as a helical segment; that stretch reads LEVFVSVLVISCPCALGL. Residues 398–685 are Cytoplasmic-facing; that stretch reads ATPMSILVAN…KLSQATIKNI (288 aa). The active-site 4-aspartylphosphate intermediate is D435. D631 and D635 together coordinate Mg(2+). A helical transmembrane segment spans residues 686 to 705; it reads KENLFWAFCYNSVFIPLACG. At 706-716 the chain is on the extracellular side; that stretch reads VLYKANIMLSP. A helical membrane pass occupies residues 717–735; sequence AIAGLAMSLSSVSVVLNSQ. The Cytoplasmic segment spans residues 736 to 745; sequence RLRNFKIKDH.

It belongs to the cation transport ATPase (P-type) (TC 3.A.3) family. Type IB subfamily.

It localises to the cell membrane. It catalyses the reaction Cu(2+)(in) + ATP + H2O = Cu(2+)(out) + ADP + phosphate + H(+). Its function is as follows. Probably involved in copper export. The polypeptide is Copper-transporting ATPase (copA) (Helicobacter pylori (strain J99 / ATCC 700824) (Campylobacter pylori J99)).